A 122-amino-acid polypeptide reads, in one-letter code: S-adenosylmethionine decarboxylase proenzyme (122 aa).

S63 functions as the Schiff-base intermediate with substrate; via pyruvic acid in the catalytic mechanism. S63 is modified (pyruvic acid (Ser); by autocatalysis). H68 serves as the catalytic Proton acceptor; for processing activity. Residue C83 is the Proton donor; for catalytic activity of the active site.

Belongs to the prokaryotic AdoMetDC family. Type 1 subfamily. In terms of assembly, heterotetramer of two alpha and two beta chains arranged as a dimer of alpha/beta heterodimers. Pyruvate serves as cofactor. Post-translationally, is synthesized initially as an inactive proenzyme. Formation of the active enzyme involves a self-maturation process in which the active site pyruvoyl group is generated from an internal serine residue via an autocatalytic post-translational modification. Two non-identical subunits are generated from the proenzyme in this reaction, and the pyruvate is formed at the N-terminus of the alpha chain, which is derived from the carboxyl end of the proenzyme. The post-translation cleavage follows an unusual pathway, termed non-hydrolytic serinolysis, in which the side chain hydroxyl group of the serine supplies its oxygen atom to form the C-terminus of the beta chain, while the remainder of the serine residue undergoes an oxidative deamination to produce ammonia and the pyruvoyl group blocking the N-terminus of the alpha chain.

The enzyme catalyses S-adenosyl-L-methionine + H(+) = S-adenosyl 3-(methylsulfanyl)propylamine + CO2. It functions in the pathway amine and polyamine biosynthesis; S-adenosylmethioninamine biosynthesis; S-adenosylmethioninamine from S-adenosyl-L-methionine: step 1/1. Catalyzes the decarboxylation of S-adenosylmethionine to S-adenosylmethioninamine (dcAdoMet), the propylamine donor required for the synthesis of the polyamines spermine and spermidine from the diamine putrescine. This is S-adenosylmethionine decarboxylase proenzyme from Methanococcus maripaludis (strain DSM 14266 / JCM 13030 / NBRC 101832 / S2 / LL).